Reading from the N-terminus, the 363-residue chain is Circumsporozoite protein (363 aa).

An N-terminal signal peptide occupies residues 1 to 22; that stretch reads MKNFILLAVSSILLVDLLPTHF. Residues 48 to 57 are compositionally biased toward polar residues; the sequence is GAQQVRQSAS. The interval 48–278 is disordered; the sequence is GAQQVRQSAS…GQNNQGANAP (231 aa). Over residues 61 to 96 the composition is skewed to basic and acidic residues; sequence GLGEKPKEGADKEKKKEKGKEKEEEPKKPNENKLKQ. The required for the binding to heparan sulfate proteoglycans (HSPGs) on the surface of host hepatocytes stretch occupies residues 80 to 88; the sequence is KEKEEEPKK. The interval 93 to 97 is region I; contains the proteolytic cleavage site; sequence KLKQP. One copy of the 1; approximate repeat lies at 98 to 109; that stretch reads NEGQPQAQGDGA. The tract at residues 98-241 is 12 X 12 AA approximate tandem repeats of N-A-G-Q-P-Q-A-Q-G-D-G-A; sequence NEGQPQAQGD…GQPQAQGDGA (144 aa). 11 repeat units span residues 110–121, 122–133, 134–145, 146–157, 158–169, 170–181, 182–193, 194–205, 206–217, 218–229, and 230–241. Gly residues predominate over residues 248–259; it reads RNGGGAPAGGNE. Residues 260 to 277 are compositionally biased toward low complexity; it reads GNKQAGKGQGQNNQGANA. Residues 289–341 form the TSP type-1 domain; it reads KIRSSVTTEWTPCSVTCGNGVRIRRKAHAGNKKAEDLTMDDLEVEACVMDKCA. 2 disulfides stabilise this stretch: Cys-301–Cys-335 and Cys-305–Cys-340. O-linked (Fuc) threonine glycosylation is present at Thr-304. Cys-340 is lipidated: GPI-anchor amidated cysteine. A propeptide spans 341–363 (removed in mature form); it reads AGIFNVVSNSLGLVILLVLALFN.

This sequence belongs to the plasmodium circumsporozoite protein family. During host cell invasion, proteolytically cleaved at the cell membrane in the region I by a papain-like cysteine protease of parasite origin. Cleavage is triggered by the sporozoite contact with highly sulfated heparan sulfate proteoglycans (HSPGs) present on the host hepatocyte cell surface. Cleavage exposes the TSP type-1 (TSR) domain and is required for productive invasion of host hepatocytes but not for adhesion to the host cell membrane. Cleavage is dispensable for sporozoite development in the oocyst, motility and for traversal of host and vector cells. Post-translationally, O-glycosylated; maybe by POFUT2.

It localises to the cell membrane. It is found in the cytoplasm. Its function is as follows. Essential sporozoite protein. In the mosquito vector, required for sporozoite development in the oocyst, migration through the vector hemolymph and entry into the vector salivary glands. In the vertebrate host, required for sporozoite migration through the host dermis and infection of host hepatocytes. Binds to highly sulfated heparan sulfate proteoglycans (HSPGs) on the surface of host hepatocytes. Functionally, in the vertebrate host, binds to highly sulfated heparan sulfate proteoglycans (HSPGs) on the surface of host hepatocytes and is required for sporozoite invasion of the host hepatocytes. The sequence is that of Circumsporozoite protein from Plasmodium knowlesi (strain H).